A 431-amino-acid chain; its full sequence is CCA-adding enzyme (431 aa).

Positions 50 and 53 each coordinate ATP. Residues serine 50 and lysine 53 each coordinate CTP. Aspartate 61, aspartate 63, and aspartate 112 together coordinate Mg(2+). Histidine 135, lysine 155, and tyrosine 164 together coordinate ATP. Histidine 135, lysine 155, and tyrosine 164 together coordinate CTP.

This sequence belongs to the tRNA nucleotidyltransferase/poly(A) polymerase family. Archaeal CCA-adding enzyme subfamily. In terms of assembly, homodimer. The cofactor is Mg(2+).

The catalysed reaction is a tRNA precursor + 2 CTP + ATP = a tRNA with a 3' CCA end + 3 diphosphate. It catalyses the reaction a tRNA with a 3' CCA end + 2 CTP + ATP = a tRNA with a 3' CCACCA end + 3 diphosphate. In terms of biological role, catalyzes the addition and repair of the essential 3'-terminal CCA sequence in tRNAs without using a nucleic acid template. Adds these three nucleotides in the order of C, C, and A to the tRNA nucleotide-73, using CTP and ATP as substrates and producing inorganic pyrophosphate. tRNA 3'-terminal CCA addition is required both for tRNA processing and repair. Also involved in tRNA surveillance by mediating tandem CCA addition to generate a CCACCA at the 3' terminus of unstable tRNAs. While stable tRNAs receive only 3'-terminal CCA, unstable tRNAs are marked with CCACCA and rapidly degraded. The sequence is that of CCA-adding enzyme from Thermoplasma acidophilum (strain ATCC 25905 / DSM 1728 / JCM 9062 / NBRC 15155 / AMRC-C165).